Here is a 203-residue protein sequence, read N- to C-terminus: MNVLIVYYSLYGHVAAMAQAVAEGVHQVPGMTATLRRVPETLSEEVIGKMGATEAQKALSHVPACTLEELEDADAIVFGTPTRFGNMCGQMRQFLDATGQIWMRGGLVGKPGGVFCSTATQHGGQETTLMSFIQTLLHHGMIVVGLPYSFAGQMRLDEVTGGSPYGATTIAGGDGSRMPSENELDAARFQGRHIADVTRRLRA.

The region spanning 3–194 (VLIVYYSLYG…DAARFQGRHI (192 aa)) is the Flavodoxin-like domain. FMN is bound by residues 9–14 (SLYGHV) and 82–84 (TRF). NAD(+) is bound at residue Tyr-11. Trp-102 contacts substrate. Residues 117 to 123 (STATQHG) and His-138 each bind FMN.

Belongs to the WrbA family. The cofactor is FMN.

The catalysed reaction is a quinone + NADH + H(+) = a quinol + NAD(+). It catalyses the reaction a quinone + NADPH + H(+) = a quinol + NADP(+). The sequence is that of NAD(P)H dehydrogenase (quinone) from Solidesulfovibrio magneticus (strain ATCC 700980 / DSM 13731 / RS-1) (Desulfovibrio magneticus).